We begin with the raw amino-acid sequence, 112 residues long: Nitrogen regulatory protein P-II (112 aa).

An O-UMP-tyrosine modification is found at Tyr-51.

This sequence belongs to the P(II) protein family. As to quaternary structure, homotrimer.

Functionally, in nitrogen-limiting conditions, when the ratio of Gln to 2-ketoglutarate decreases, P-II is uridylylated to P-II-UMP. P-II-UMP allows the deadenylation of glutamine synthetase (GS), thus activating the enzyme. Conversely, in nitrogen excess P-II is deuridylated and promotes the adenylation of GS. P-II indirectly controls the transcription of the GS gene (glnA). P-II prevents NR-II-catalyzed conversion of NR-I to NR-I-phosphate, the transcriptional activator of glnA. When P-II is uridylylated to P-II-UMP, these events are reversed. The protein is Nitrogen regulatory protein P-II (glnB) of Mycobacterium bovis (strain ATCC BAA-935 / AF2122/97).